The following is a 256-amino-acid chain: Cell division protein FtsQ (256 aa).

The Cytoplasmic portion of the chain corresponds to 1-23; that stretch reads MIKAVKMNTSFDKEKVRKHLPGA. A helical membrane pass occupies residues 24–44; it reads IFLSLVVITSLWLVISTISWM. Residues 45–256 are Periplasmic-facing; that stretch reads TDEDRLPLSH…SDDVENKEEN (212 aa). The region spanning 50-120 is the POTRA domain; sequence LPLSHMIIQG…ETIKVFVVEH (71 aa).

This sequence belongs to the FtsQ/DivIB family. FtsQ subfamily. In terms of assembly, part of a complex composed of FtsB, FtsL and FtsQ.

It is found in the cell inner membrane. Functionally, essential cell division protein. May link together the upstream cell division proteins, which are predominantly cytoplasmic, with the downstream cell division proteins, which are predominantly periplasmic. May control correct divisome assembly. This is Cell division protein FtsQ from Aliivibrio fischeri (strain ATCC 700601 / ES114) (Vibrio fischeri).